We begin with the raw amino-acid sequence, 541 residues long: Tyrosine-protein kinase Yes (541 aa).

A lipid anchor (N-myristoyl glycine) is attached at Gly2. Cys3 carries the S-palmitoyl cysteine; in membrane form lipid modification. Phosphotyrosine is present on Tyr32. Positions 89-150 (GGVTIFVALY…PSNYVVPADS (62 aa)) constitute an SH3 domain. One can recognise an SH2 domain in the interval 156–253 (WYFGKMGRKD…GLCHKLTTVC (98 aa)). The Protein kinase domain maps to 275-528 (LRLEVKLGQG…YIQSFLEDYF (254 aa)). ATP is bound by residues 281–289 (LGQGCFGEV) and Lys303. Phosphotyrosine is present on residues Tyr334 and Tyr343. The Proton acceptor role is filled by Asp394. Tyr424 bears the Phosphotyrosine; by autocatalysis mark. Tyr535 is modified (phosphotyrosine).

It belongs to the protein kinase superfamily. Tyr protein kinase family. SRC subfamily. As to quaternary structure, interacts with YAP1. Interacts with FASLG. Interacts with CTNND1; this interaction allows YES1-mediated activation of FYN and FER and subsequent phosphorylation of CTNND1. Interacts with CSF1R. Interacts with IL6ST/gp130. Interacts with SCRIB, when YES1 is in a closed conformation; the interaction facilitates YES1 autophosphorylation. Phosphorylated. Phosphorylation by CSK on the C-terminal tail maintains the enzyme in an inactive state. Autophosphorylation at Tyr-424 maintains enzyme activity by blocking CSK-mediated inhibition. In terms of processing, palmitoylation at Cys-3 promotes membrane localization.

It is found in the cell membrane. It localises to the cytoplasm. Its subcellular location is the cytoskeleton. The protein localises to the microtubule organizing center. The protein resides in the centrosome. It is found in the cytosol. It localises to the cell junction. It carries out the reaction L-tyrosyl-[protein] + ATP = O-phospho-L-tyrosyl-[protein] + ADP + H(+). Non-receptor protein tyrosine kinase that is involved in the regulation of cell growth and survival, apoptosis, cell-cell adhesion, cytoskeleton remodeling, and differentiation. Stimulation by receptor tyrosine kinases (RTKs) including EGFR, PDGFR, CSF1R and FGFR leads to recruitment of YES1 to the phosphorylated receptor, and activation and phosphorylation of downstream substrates. Upon EGFR activation, promotes the phosphorylation of PARD3 to favor epithelial tight junction assembly. Participates in the phosphorylation of specific junctional components such as CTNND1 by stimulating the FYN and FER tyrosine kinases at cell-cell contacts. Upon T-cell stimulation by CXCL12, phosphorylates collapsin response mediator protein 2/DPYSL2 and induces T-cell migration. Participates in CD95L/FASLG signaling pathway and mediates AKT-mediated cell migration. Plays a role in cell cycle progression by phosphorylating the cyclin dependent kinase 4/CDK4 thus regulating the G1 phase. Also involved in G2/M progression and cytokinesis. Catalyzes phosphorylation of organic cation transporter OCT2 which induces its transport activity. The sequence is that of Tyrosine-protein kinase Yes (Yes1) from Mus musculus (Mouse).